A 428-amino-acid polypeptide reads, in one-letter code: ATP-dependent RNA helicase RhlB (428 aa).

Residues 9-37 carry the Q motif motif; that stretch reads QKFSDFALHPLVLEALEKKGFQHCTPIQA. One can recognise a Helicase ATP-binding domain in the interval 40 to 219; the sequence is LPLTLSGRDV…FEQMNNAEYV (180 aa). Residue 53-60 coordinates ATP; that stretch reads AQTGTGKT. A DEAD box motif is present at residues 165 to 168; the sequence is DEAD. The Helicase C-terminal domain occupies 245–390; it reads RLLQTLIEEE…VSKYNSDALL (146 aa). The segment at 392 to 428 is disordered; sequence DLPAPKRLARPRGGNGPRRNSAPRRGGAPRNNRKRSG. Positions 408–421 are enriched in low complexity; sequence PRRNSAPRRGGAPR.

This sequence belongs to the DEAD box helicase family. RhlB subfamily. As to quaternary structure, component of the RNA degradosome, which is a multiprotein complex involved in RNA processing and mRNA degradation.

The protein resides in the cytoplasm. The enzyme catalyses ATP + H2O = ADP + phosphate + H(+). In terms of biological role, DEAD-box RNA helicase involved in RNA degradation. Has RNA-dependent ATPase activity and unwinds double-stranded RNA. This Serratia proteamaculans (strain 568) protein is ATP-dependent RNA helicase RhlB.